The chain runs to 232 residues: Zinc-finger homeodomain protein 5 (232 aa).

Residues 1–11 are compositionally biased toward acidic residues; it reads MELSEHEEDAG. A disordered region spans residues 1 to 25; it reads MELSEHEEDAGDVGGGCSSPPTPPH. The segment at 40-86 adopts a ZF-HD dimerization-type; degenerate zinc-finger fold; it reads YHECLRNHAAASGGHVVDGCGEFMPASTEEPLACAACGCHRSFHRRD. The interval 126-170 is disordered; sequence GLPFPGYGTPSGGTGTTTASSSDERLRPSPVQPRRRSRTTFTREQ. The homeobox DNA-binding region spans 159-222; sequence RRRSRTTFTR…NNKHSFKQKQ (64 aa).

In terms of assembly, homo- and heterodimer with other ZFHD proteins.

It is found in the nucleus. In terms of biological role, putative transcription factor. The protein is Zinc-finger homeodomain protein 5 (ZHD5) of Oryza sativa subsp. indica (Rice).